Here is a 425-residue protein sequence, read N- to C-terminus: Tol-Pal system protein TolB (425 aa).

The first 22 residues, 1 to 22 (MRNFLYCTGVLLLLWMSTSSQA), serve as a signal peptide directing secretion.

This sequence belongs to the TolB family. In terms of assembly, the Tol-Pal system is composed of five core proteins: the inner membrane proteins TolA, TolQ and TolR, the periplasmic protein TolB and the outer membrane protein Pal. They form a network linking the inner and outer membranes and the peptidoglycan layer.

The protein localises to the periplasm. In terms of biological role, part of the Tol-Pal system, which plays a role in outer membrane invagination during cell division and is important for maintaining outer membrane integrity. The chain is Tol-Pal system protein TolB from Nitrosomonas europaea (strain ATCC 19718 / CIP 103999 / KCTC 2705 / NBRC 14298).